A 227-amino-acid polypeptide reads, in one-letter code: 4'-phosphopantetheinyl transferase PptT (227 aa).

Residues Arg48, Arg56, 75 to 78, 92 to 93, and Asp114 each bind CoA; these read KGDK and TH. The Mg(2+) site is built by Asp114, Ala115, and Glu116. CoA is bound by residues Glu157, Lys161, and Leu171.

It belongs to the P-Pant transferase superfamily. Mg(2+) serves as cofactor.

It catalyses the reaction apo-[ACP] + CoA = holo-[ACP] + adenosine 3',5'-bisphosphate + H(+). With respect to regulation, inhibited by the amidino-urea compound 1-[(2,6-diethylphenyl)-3-N-ethylcarbamimodoyl]urea (compound 8918). It acts by binding to the phosphopantetheine pocket in the active site. Inhibition by compound 8918 kills M.tuberculosis. In terms of biological role, transfers the 4'-phosphopantetheine moiety from coenzyme A to a Ser of acyl-carrier-protein. Involved in post-translational modification of various type-I polyketide synthases required for the formation of both mycolic acids and lipid virulence factors. Acts on Pks13, Mas, PpsA, PpsB, PpsC and PpsD. Also acts on AcpM, the meromycolate extension acyl carrier protein. In addition, is involved in the activation of the acyl carrier protein MbtL and the nonribosomal peptides synthases MbtB and MbtE, which are involved in the biosynthesis of the siderophore mycobactin. Its function is as follows. Required for the replication and survival of Mycobacterium during the acute and chronic phases of infection in mice. The polypeptide is 4'-phosphopantetheinyl transferase PptT (Mycobacterium tuberculosis (strain ATCC 25618 / H37Rv)).